The sequence spans 233 residues: Aspartate/glutamate leucyltransferase (233 aa).

Belongs to the R-transferase family. Bpt subfamily.

It localises to the cytoplasm. It carries out the reaction N-terminal L-glutamyl-[protein] + L-leucyl-tRNA(Leu) = N-terminal L-leucyl-L-glutamyl-[protein] + tRNA(Leu) + H(+). The catalysed reaction is N-terminal L-aspartyl-[protein] + L-leucyl-tRNA(Leu) = N-terminal L-leucyl-L-aspartyl-[protein] + tRNA(Leu) + H(+). In terms of biological role, functions in the N-end rule pathway of protein degradation where it conjugates Leu from its aminoacyl-tRNA to the N-termini of proteins containing an N-terminal aspartate or glutamate. The protein is Aspartate/glutamate leucyltransferase of Vibrio campbellii (strain ATCC BAA-1116).